The following is a 120-amino-acid chain: Large ribosomal subunit protein bL19 (120 aa).

It belongs to the bacterial ribosomal protein bL19 family.

Functionally, this protein is located at the 30S-50S ribosomal subunit interface and may play a role in the structure and function of the aminoacyl-tRNA binding site. In Chlorobium chlorochromatii (strain CaD3), this protein is Large ribosomal subunit protein bL19.